The chain runs to 333 residues: MSGDEMIFDPTMSKKKKKKKKPFMLDEEGDAQTEETQPLETKEVEPEPTEDKDVEADEEDSRKKDASDDLDDLNFFNQKKKKKKTKKIFDIDEAEEGVKDLKIENDVQEPAEPEDDLDIMLGNKKKKKKNVKFPDEDEILEKDEALEDEDSKKDDGISFSNQTGPAWAGSERDYTYEELLNRVFNIMREKNPDMVAGEKRKFVMKPPQVVRVGTKKTSFVNFTDICKLLHRQPKHLLAFLLAELGTSGSIDGNNQLVIKGRFQQKQIENVLRRYIKEYVTCHTCRSPDTILQKDTRLYFLQCETCHSRCSVASIKTGFQAVTGKRAQLRAKAN.

2 disordered regions span residues 1-120 and 139-165; these read MSGD…LDIM and ILEK…QTGP. The residue at position 2 (S2) is an N-acetylserine. The residue at position 2 (S2) is a Phosphoserine. S13 carries the phosphoserine; by PKC; in vitro modification. Residues 13–22 show a composition bias toward basic residues; that stretch reads SKKKKKKKKP. T36 carries the phosphothreonine modification. Residues 40-51 are compositionally biased toward basic and acidic residues; that stretch reads ETKEVEPEPTED. At S67 the chain carries Phosphoserine; by CK2. Over residues 96 to 105 the composition is skewed to basic and acidic residues; sequence EGVKDLKIEN. A Glycyl lysine isopeptide (Lys-Gly) (interchain with G-Cter in SUMO2) cross-link involves residue K102. 2 stretches are compositionally biased toward acidic residues: residues 106–118 and 139–149; these read DVQE…DDLD and ILEKDEALEDE. At S158 the chain carries Phosphoserine. S218 is subject to Phosphoserine; by PKA; in vitro. 2 positions are modified to N6-acetyllysine: K265 and K293. Residues 281-305 form a C4-type zinc finger; the sequence is CHTCRSPDTILQKDTRLYFLQCETC.

The protein belongs to the eIF-2-beta/eIF-5 family. As to quaternary structure, eukaryotic translation initiation factor 2 eIF2 is a heterotrimeric complex composed of an alpha (EIF2S1), a beta (EIF2S2) and a gamma (EIF2S3) chain. eIF2 is member of the 43S pre-initiation complex (43S PIC). eIF2 forms a complex with at least CELF1/CUGBP1, CALR, CALR3, EIF2S1, EIF2S2, HSP90B1 and HSPA5. Interacts with BZW2/5MP1. Interacts with EIF5. In terms of processing, the N-terminus is blocked.

It is found in the cytoplasm. Its subcellular location is the cytosol. In terms of biological role, component of the eIF2 complex that functions in the early steps of protein synthesis by forming a ternary complex with GTP and initiator tRNA. This complex binds to a 40S ribosomal subunit, followed by mRNA binding to form the 43S pre-initiation complex (43S PIC). Junction of the 60S ribosomal subunit to form the 80S initiation complex is preceded by hydrolysis of the GTP bound to eIF2 and release of an eIF2-GDP binary complex. In order for eIF2 to recycle and catalyze another round of initiation, the GDP bound to eIF2 must exchange with GTP by way of a reaction catalyzed by eIF2B. The sequence is that of Eukaryotic translation initiation factor 2 subunit 2 (EIF2S2) from Oryctolagus cuniculus (Rabbit).